The primary structure comprises 1205 residues: U2 snRNP component prp10 (1205 aa).

Disordered stretches follow at residues 39–58, 122–175, and 202–254; these read QKEA…EGTQ, YADE…GRSY, and GTLK…RRSR. Residues 44 to 58 are compositionally biased toward polar residues; it reads KNSSTNGSVNIEGTQ. A compositionally biased stretch (basic and acidic residues) spans 130 to 153; sequence MQERQSKKQIQDRESDYQKQRYDR. 16 HEAT repeats span residues 393 to 429, 431 to 473, 475 to 505, 506 to 540, 541 to 578, 582 to 619, 665 to 702, 745 to 782, 828 to 865, 912 to 949, 954 to 991, 993 to 1024, 1025 to 1061, 1065 to 1102, 1107 to 1142, and 1143 to 1179; these read LRER…DFGA, ALFN…PFTH, ILVV…AKAS, GLAH…ASAL, GVPA…LLGC, PHLK…AATP, HFTR…TDGV, VGSR…SLGV, PYLP…VLKA, PPIR…RGSE, REWM…AIGP, DVLA…AETC, MPFT…YIGE, DYVY…GCVG, DAMI…RNCI, and GVGP…QSAD.

This sequence belongs to the SF3B1 family. Belongs to the 40S cdc5-associated complex (or cwf complex), a spliceosome sub-complex reminiscent of a late-stage spliceosome composed of the U2, U5 and U6 snRNAs and at least brr2, cdc5, cwf2/prp3, cwf3/syf1, cwf4/syf3, cwf5/ecm2, spp42/cwf6, cwf7/spf27, cwf8, cwf9, cwf10, cwf11, cwf12, prp45/cwf13, cwf14, cwf15, cwf16, cwf17, cwf18, cwf19, cwf20, cwf21, cwf22, cwf23, cwf24, cwf25, cwf26, cyp7/cwf27, cwf28, cwf29/ist3, lea1, msl1, prp5/cwf1, prp10, prp12/sap130, prp17, prp22, sap61, sap62, sap114, sap145, slu7, smb1, smd1, smd3, smf1, smg1 and syf2.

It is found in the nucleus. In terms of biological role, contacts pre-mRNA on both sides of the branch site early in spliceosome assembly. The polypeptide is U2 snRNP component prp10 (prp10) (Schizosaccharomyces pombe (strain 972 / ATCC 24843) (Fission yeast)).